Here is a 438-residue protein sequence, read N- to C-terminus: Proline--tRNA ligase (438 aa).

Belongs to the class-II aminoacyl-tRNA synthetase family. ProS type 2 subfamily. Homodimer.

It is found in the cytoplasm. The catalysed reaction is tRNA(Pro) + L-proline + ATP = L-prolyl-tRNA(Pro) + AMP + diphosphate. Functionally, catalyzes the attachment of proline to tRNA(Pro) in a two-step reaction: proline is first activated by ATP to form Pro-AMP and then transferred to the acceptor end of tRNA(Pro). This chain is Proline--tRNA ligase, found in Gluconobacter oxydans (strain 621H) (Gluconobacter suboxydans).